The sequence spans 211 residues: Imidazole glycerol phosphate synthase subunit HisH (211 aa).

Positions methionine 1–methionine 211 constitute a Glutamine amidotransferase type-1 domain. The active-site Nucleophile is cysteine 79. Catalysis depends on residues histidine 186 and glutamate 188.

In terms of assembly, heterodimer of HisH and HisF.

It is found in the cytoplasm. It catalyses the reaction 5-[(5-phospho-1-deoxy-D-ribulos-1-ylimino)methylamino]-1-(5-phospho-beta-D-ribosyl)imidazole-4-carboxamide + L-glutamine = D-erythro-1-(imidazol-4-yl)glycerol 3-phosphate + 5-amino-1-(5-phospho-beta-D-ribosyl)imidazole-4-carboxamide + L-glutamate + H(+). It carries out the reaction L-glutamine + H2O = L-glutamate + NH4(+). It functions in the pathway amino-acid biosynthesis; L-histidine biosynthesis; L-histidine from 5-phospho-alpha-D-ribose 1-diphosphate: step 5/9. IGPS catalyzes the conversion of PRFAR and glutamine to IGP, AICAR and glutamate. The HisH subunit catalyzes the hydrolysis of glutamine to glutamate and ammonia as part of the synthesis of IGP and AICAR. The resulting ammonia molecule is channeled to the active site of HisF. The chain is Imidazole glycerol phosphate synthase subunit HisH from Geobacillus sp. (strain WCH70).